Consider the following 333-residue polypeptide: Mitochondrial fission regulator 1 (333 aa).

Residues 1–48 (MLGWIKRLIRMVFQQVGVSMQSVLWSRKPYGSSRSIVRKIGTNLSLIQ) constitute a mitochondrion transit peptide. Phosphoserine is present on Ser-119. Residues 137–169 (NEEALQKICALENELAALRAQIAKIVTQQEQQN) adopt a coiled-coil conformation. 2 disordered regions span residues 177–198 (STTF…PPPA) and 288–315 (SDSQ…FGPH). Residues 179 to 304 (TFGTIPPHPP…EKGIPKSESE (126 aa)) form a necessary and sufficient to promote mitochondrial fission region. The segment covering 184–198 (PPHPPPPPPPLPPPA) has biased composition (pro residues). Residues 288–307 (SDSQDEVEKGIPKSESEATS) show a composition bias toward basic and acidic residues.

The protein belongs to the MTFR1 family.

The protein resides in the mitochondrion. Its function is as follows. May play a role in mitochondrial aerobic respiration. May also regulate mitochondrial organization and fission. This chain is Mitochondrial fission regulator 1 (MTFR1), found in Homo sapiens (Human).